The primary structure comprises 71 residues: Sec-independent protein translocase protein TatA (71 aa).

The helical transmembrane segment at 1–21 (MGSFSMWHWLIVLAIVLLLFG) threads the bilayer. Positions 40 to 71 (KKGMSDDDTAPDGTPKPADQSKTVDHRADDHK) are disordered. Basic and acidic residues predominate over residues 61 to 71 (KTVDHRADDHK).

The protein belongs to the TatA/E family. The Tat system comprises two distinct complexes: a TatABC complex, containing multiple copies of TatA, TatB and TatC subunits, and a separate TatA complex, containing only TatA subunits. Substrates initially bind to the TatABC complex, which probably triggers association of the separate TatA complex to form the active translocon.

The protein localises to the cell inner membrane. Its function is as follows. Part of the twin-arginine translocation (Tat) system that transports large folded proteins containing a characteristic twin-arginine motif in their signal peptide across membranes. TatA could form the protein-conducting channel of the Tat system. This chain is Sec-independent protein translocase protein TatA, found in Allorhizobium ampelinum (strain ATCC BAA-846 / DSM 112012 / S4) (Agrobacterium vitis (strain S4)).